A 430-amino-acid chain; its full sequence is MKIEVKDSTMIKPSAETPGGSLWLSNLDLLSPANYHTLSVHFYSHDGSDNFFDAAGLKESLSRALVEFYPYAGRLKLNGNRLEIDCNNEGLLLVEAECDGALDELGDFAPRPELNLIPKVDYSRGISTYPLMVFQLTRFKCGGVALGVANEHHLSDGVAALHFINTWAHLSRGAPAPTPLPHFDRSSLSARNPPQPQFSHAEYQPPPTLENPLPHTDIAHSRFKLTRDQLNSLKSKFKTAPADGGAGKSYSTFEVLAGHIWRSVCIARGLPEGQETKLHIPFDGRGRLQLPPGFFGNAIFFATPIATCGEIESNSLNYAVRRVSDGVSRLDEDYLRSSIDFLELQEDISKLAQGAHSFRCPNLWVISWVWLPIYEPDFGWGKAVYMGPWAAPFEGKSYLLPNPEKDGSLFVSITLHKQHMERFEKLFYEI.

His-152 serves as the catalytic Proton acceptor. The tract at residues 178 to 210 is disordered; the sequence is TPLPHFDRSSLSARNPPQPQFSHAEYQPPPTLE. The Proton acceptor role is filled by Asp-377.

The protein belongs to the plant acyltransferase family.

It catalyses the reaction (2R)-3-(3,4-dihydroxyphenyl)lactate + (E)-caffeoyl-CoA = (R)-rosmarinate + CoA. Functionally, involved in the biosynthesis of rosmarinic acid, a compound with antiviral, antimicrobial and anti-inflammatory activities. Can use 4-coumaroyl- and caffeoyl-CoA as hydroxycinnamoyl donors and 4-Hydroxyphenyllactate and 3.4-Dihydroxyphenyllactate, but not shikimate or quinate, as hydroxycinnamoyl acceptors. Can also putatively catalyze amide formation with D-amino acids as acceptors. This chain is Rosmarinate synthase (RAS), found in Plectranthus scutellarioides (Coleus).